Reading from the N-terminus, the 122-residue chain is Yop proteins translocation protein X (122 aa).

Residues 71 to 87 (HRAQDYRRELDTLQSLL) adopt a coiled-coil conformation.

As to quaternary structure, interacts with YscY.

The protein localises to the secreted. Functionally, required for Yop secretion. The protein is Yop proteins translocation protein X (yscX) of Yersinia enterocolitica serotype O:8 / biotype 1B (strain NCTC 13174 / 8081).